A 258-amino-acid polypeptide reads, in one-letter code: Aspartate/glutamate leucyltransferase (258 aa).

This sequence belongs to the R-transferase family. Bpt subfamily.

The protein resides in the cytoplasm. It carries out the reaction N-terminal L-glutamyl-[protein] + L-leucyl-tRNA(Leu) = N-terminal L-leucyl-L-glutamyl-[protein] + tRNA(Leu) + H(+). The enzyme catalyses N-terminal L-aspartyl-[protein] + L-leucyl-tRNA(Leu) = N-terminal L-leucyl-L-aspartyl-[protein] + tRNA(Leu) + H(+). Functions in the N-end rule pathway of protein degradation where it conjugates Leu from its aminoacyl-tRNA to the N-termini of proteins containing an N-terminal aspartate or glutamate. The chain is Aspartate/glutamate leucyltransferase from Bradyrhizobium sp. (strain BTAi1 / ATCC BAA-1182).